The following is a 200-amino-acid chain: Superoxide dismutase [Mn] 2 (200 aa).

Mn(2+)-binding residues include His-28, His-76, Asp-158, and His-162.

The protein belongs to the iron/manganese superoxide dismutase family. Mn(2+) is required as a cofactor.

The catalysed reaction is 2 superoxide + 2 H(+) = H2O2 + O2. Its function is as follows. Destroys superoxide anion radicals which are normally produced within the cells and which are toxic to biological systems. The sequence is that of Superoxide dismutase [Mn] 2 (sod2) from Halobacterium salinarum (strain ATCC 700922 / JCM 11081 / NRC-1) (Halobacterium halobium).